Here is a 79-residue protein sequence, read N- to C-terminus: Acyl carrier protein (79 aa).

The region spanning 1-77 (MNNVEKKIKK…KSIDYINNKN (77 aa)) is the Carrier domain. At serine 37 the chain carries O-(pantetheine 4'-phosphoryl)serine.

This sequence belongs to the acyl carrier protein (ACP) family. 4'-phosphopantetheine is transferred from CoA to a specific serine of apo-ACP by AcpS. This modification is essential for activity because fatty acids are bound in thioester linkage to the sulfhydryl of the prosthetic group.

Its subcellular location is the cytoplasm. It participates in lipid metabolism; fatty acid biosynthesis. Its function is as follows. Carrier of the growing fatty acid chain in fatty acid biosynthesis. This is Acyl carrier protein from Buchnera aphidicola subsp. Schizaphis graminum (strain Sg).